A 381-amino-acid chain; its full sequence is Teichoic acid glycerol-phosphate primase (381 aa).

The protein belongs to the CDP-glycerol glycerophosphotransferase family.

It is found in the cell membrane. The catalysed reaction is N-acetyl-beta-D-mannosaminyl-(1-&gt;4)-N-acetyl-alpha-D-glucosaminyl di-trans,octa-cis-undecaprenyl diphosphate + CDP-glycerol = 4-O-[(2R)-glycerylphospho]-N-acetyl-beta-D-mannosaminyl-(1-&gt;4)-N-acetyl-alpha-D-glucosaminyl di-trans,octa-cis-undecaprenyl diphosphate + CMP + H(+). It participates in cell wall biogenesis; poly(glycerol phosphate) teichoic acid biosynthesis. In terms of biological role, catalyzes the addition of a single glycerol phosphate residue to the prenoldiphosphate-linked disaccharide, as a primer for polymerisation by TagF. The polypeptide is Teichoic acid glycerol-phosphate primase (tagB) (Bacillus subtilis (strain 168)).